The sequence spans 145 residues: Acidic phospholipase A2 S1-11 (145 aa).

An N-terminal signal peptide occupies residues 1–19; it reads MYPAHLLVLLAVCVSLLGA. A propeptide spanning residues 20-27 is cleaved from the precursor; sequence SDMPPQPL. 5 disulfides stabilise this stretch: C38–C99, C54–C144, C56–C72, C71–C127, and C106–C118. Positions 55, 57, and 59 each coordinate Ca(2+). H75 is a catalytic residue. Residue D76 coordinates Ca(2+). D121 is an active-site residue.

Belongs to the phospholipase A2 family. Group I subfamily. D49 sub-subfamily. Ca(2+) is required as a cofactor. In terms of processing, this enzyme lacks two of the seven disulfide bonds found in similar PLA2 proteins. As to expression, expressed by the venom gland.

It localises to the secreted. It carries out the reaction a 1,2-diacyl-sn-glycero-3-phosphocholine + H2O = a 1-acyl-sn-glycero-3-phosphocholine + a fatty acid + H(+). Snake venom phospholipase A2 (PLA2) that inhibits collagen-induced platelet aggregation. PLA2 catalyzes the calcium-dependent hydrolysis of the 2-acyl groups in 3-sn-phosphoglycerides. This Austrelaps superbus (Lowland copperhead snake) protein is Acidic phospholipase A2 S1-11.